Reading from the N-terminus, the 439-residue chain is Enolase 1-1 (439 aa).

T85 carries the phosphothreonine modification. Residues H159 and E168 each coordinate substrate. E211 serves as the catalytic Proton donor. A Mg(2+)-binding site is contributed by D246. A phosphoserine mark is found at S249 and S250. Residue Y253 is modified to Phosphotyrosine. E295 and D320 together coordinate substrate. Residues E295 and D320 each contribute to the Mg(2+) site. Catalysis depends on K345, which acts as the Proton acceptor. S351 is subject to Phosphoserine. At T353 the chain carries Phosphothreonine. S355 carries the post-translational modification Phosphoserine. Residues 372 to 375 and K396 contribute to the substrate site; that span reads SHRS. The residue at position 421 (S421) is a Phosphoserine.

The protein belongs to the enolase family. Homodimer. The cofactor is Mg(2+).

The protein resides in the cytoplasm. It catalyses the reaction (2R)-2-phosphoglycerate = phosphoenolpyruvate + H2O. The protein operates within carbohydrate degradation; glycolysis; pyruvate from D-glyceraldehyde 3-phosphate: step 4/5. The chain is Enolase 1-1 (eno101) from Schizosaccharomyces pombe (strain 972 / ATCC 24843) (Fission yeast).